A 613-amino-acid polypeptide reads, in one-letter code: Threonine--tRNA ligase (613 aa).

Residues 1 to 147 (MRLLLIHARS…TITPQESAPQ (147 aa)) are editing domain. 2 catalytic regions span residues 199–495 (PRYI…PALP) and 200–495 (RYID…PALP). Zn(2+) is bound by residues Cys292, His343, and His464.

This sequence belongs to the class-II aminoacyl-tRNA synthetase family. In terms of assembly, homodimer. It depends on Zn(2+) as a cofactor.

Its subcellular location is the cytoplasm. The enzyme catalyses tRNA(Thr) + L-threonine + ATP = L-threonyl-tRNA(Thr) + AMP + diphosphate + H(+). Its function is as follows. Catalyzes the attachment of threonine to tRNA(Thr) in a two-step reaction: L-threonine is first activated by ATP to form Thr-AMP and then transferred to the acceptor end of tRNA(Thr). Also edits incorrectly charged L-seryl-tRNA(Thr). This chain is Threonine--tRNA ligase, found in Caldivirga maquilingensis (strain ATCC 700844 / DSM 13496 / JCM 10307 / IC-167).